A 189-amino-acid polypeptide reads, in one-letter code: Autophagy receptor ATG45 (189 aa).

A binds glycogen region spans residues 1-96; sequence MSNFLLVIPE…TNNILHFKDN (96 aa). A required for sequestration into autophagosomes region spans residues 97–189; sequence EASQLMDIPL…AKKVKTYWNK (93 aa). Ser-107 is modified (phosphoserine). The short motif at 127–130 is the ATG8 interaction motif (AIM) element; it reads YVNL. A Phosphoserine modification is found at Ser-172. The may facilitate interactions with the autophagosome membrane stretch occupies residues 176-187; the sequence is LMCIAKKVKTYW.

Interacts with ATG8.

The protein localises to the cytoplasm. The protein resides in the cytosol. Its subcellular location is the cytoplasmic vesicle. It localises to the autophagosome. Its function is as follows. Autophagy receptor for glycogen that facilitates the sequestration of glycogen assemblies into autophagosomes as part of bulk autophagy; the autophagy of glycogen (glycophagy) is stimulated during prolonged nitrogen starvation and during sporulation. The chain is Autophagy receptor ATG45 from Saccharomyces cerevisiae (strain ATCC 204508 / S288c) (Baker's yeast).